Reading from the N-terminus, the 248-residue chain is Probable transcriptional regulatory protein FTF0655 (248 aa).

This sequence belongs to the TACO1 family.

The protein resides in the cytoplasm. The protein is Probable transcriptional regulatory protein FTF0655 of Francisella tularensis subsp. tularensis (strain FSC 198).